A 211-amino-acid polypeptide reads, in one-letter code: Uridine kinase (211 aa).

15–22 (GGSGSGKT) contributes to the ATP binding site.

Belongs to the uridine kinase family.

It localises to the cytoplasm. The catalysed reaction is uridine + ATP = UMP + ADP + H(+). The enzyme catalyses cytidine + ATP = CMP + ADP + H(+). It functions in the pathway pyrimidine metabolism; CTP biosynthesis via salvage pathway; CTP from cytidine: step 1/3. It participates in pyrimidine metabolism; UMP biosynthesis via salvage pathway; UMP from uridine: step 1/1. In Latilactobacillus sakei subsp. sakei (strain 23K) (Lactobacillus sakei subsp. sakei), this protein is Uridine kinase.